The primary structure comprises 922 residues: Isoleucine--tRNA ligase (922 aa).

A 'HIGH' region motif is present at residues 57-67; that stretch reads PYANGDIHMGH. Residue E553 participates in L-isoleucyl-5'-AMP binding. Residues 594 to 598 carry the 'KMSKS' region motif; that stretch reads KMSKS. K597 contributes to the ATP binding site. C889, C892, C909, and C912 together coordinate Zn(2+).

It belongs to the class-I aminoacyl-tRNA synthetase family. IleS type 1 subfamily. In terms of assembly, monomer. The cofactor is Zn(2+).

The protein resides in the cytoplasm. It catalyses the reaction tRNA(Ile) + L-isoleucine + ATP = L-isoleucyl-tRNA(Ile) + AMP + diphosphate. Catalyzes the attachment of isoleucine to tRNA(Ile). As IleRS can inadvertently accommodate and process structurally similar amino acids such as valine, to avoid such errors it has two additional distinct tRNA(Ile)-dependent editing activities. One activity is designated as 'pretransfer' editing and involves the hydrolysis of activated Val-AMP. The other activity is designated 'posttransfer' editing and involves deacylation of mischarged Val-tRNA(Ile). This Bacillus licheniformis (strain ATCC 14580 / DSM 13 / JCM 2505 / CCUG 7422 / NBRC 12200 / NCIMB 9375 / NCTC 10341 / NRRL NRS-1264 / Gibson 46) protein is Isoleucine--tRNA ligase.